The following is a 160-amino-acid chain: 6,7-dimethyl-8-ribityllumazine synthase (160 aa).

Residues F23, 61 to 63 (SFE), and 85 to 87 (AVI) contribute to the 5-amino-6-(D-ribitylamino)uracil site. 90 to 91 (DT) provides a ligand contact to (2S)-2-hydroxy-3-oxobutyl phosphate. Catalysis depends on H93, which acts as the Proton donor. F118 contacts 5-amino-6-(D-ribitylamino)uracil. R132 provides a ligand contact to (2S)-2-hydroxy-3-oxobutyl phosphate.

Belongs to the DMRL synthase family.

It carries out the reaction (2S)-2-hydroxy-3-oxobutyl phosphate + 5-amino-6-(D-ribitylamino)uracil = 6,7-dimethyl-8-(1-D-ribityl)lumazine + phosphate + 2 H2O + H(+). The protein operates within cofactor biosynthesis; riboflavin biosynthesis; riboflavin from 2-hydroxy-3-oxobutyl phosphate and 5-amino-6-(D-ribitylamino)uracil: step 1/2. Its function is as follows. Catalyzes the formation of 6,7-dimethyl-8-ribityllumazine by condensation of 5-amino-6-(D-ribitylamino)uracil with 3,4-dihydroxy-2-butanone 4-phosphate. This is the penultimate step in the biosynthesis of riboflavin. The chain is 6,7-dimethyl-8-ribityllumazine synthase from Synechococcus sp. (strain CC9311).